Consider the following 388-residue polypeptide: Angiopoietin-related protein 5 (388 aa).

The signal sequence occupies residues 1–25 (MMSPSQASLLFLNVCIFICGEAVQG). Residue Asn53 is glycosylated (N-linked (GlcNAc...) asparagine). Residues 98–123 (LRNMMDEQQASLDYLSNQVNELMNRV) are a coiled coil. The 243-residue stretch at 141–383 (RPVQSHGLDC…SVSMKIRRMY (243 aa)) folds into the Fibrinogen C-terminal domain. Residue Asn238 is glycosylated (N-linked (GlcNAc...) asparagine). Intrachain disulfides connect Cys310/Cys314 and Cys324/Cys338. A glycan (N-linked (GlcNAc...) asparagine) is linked at Asn329.

Mainly expressed in adult heart.

Its subcellular location is the secreted. In Homo sapiens (Human), this protein is Angiopoietin-related protein 5 (ANGPTL5).